A 119-amino-acid polypeptide reads, in one-letter code: Large ribosomal subunit protein uL18 (119 aa).

Belongs to the universal ribosomal protein uL18 family. Part of the 50S ribosomal subunit; part of the 5S rRNA/L5/L18/L25 subcomplex. Contacts the 5S and 23S rRNAs.

Functionally, this is one of the proteins that bind and probably mediate the attachment of the 5S RNA into the large ribosomal subunit, where it forms part of the central protuberance. This is Large ribosomal subunit protein uL18 from Malacoplasma penetrans (strain HF-2) (Mycoplasma penetrans).